Here is a 130-residue protein sequence, read N- to C-terminus: HTH-type transcriptional repressor YtrA (130 aa).

Residues 10 to 78 (TPIYEQIIQQ…RGRGTYISEN (69 aa)) form the HTH gntR-type domain. The H-T-H motif DNA-binding region spans 38–57 (VRELATIIIANPNTVSKAYK).

Functionally, negatively regulates ABC transporter complex ytrBCDEF that plays a role in acetoin utilization during stationary phase and sporulation. This Bacillus subtilis (strain 168) protein is HTH-type transcriptional repressor YtrA (ytrA).